The following is a 306-amino-acid chain: Ribonuclease Z (306 aa).

The Zn(2+) site is built by H63, H65, D67, H68, H141, D211, and H269. D67 functions as the Proton acceptor in the catalytic mechanism.

It belongs to the RNase Z family. Homodimer. The cofactor is Zn(2+).

The catalysed reaction is Endonucleolytic cleavage of RNA, removing extra 3' nucleotides from tRNA precursor, generating 3' termini of tRNAs. A 3'-hydroxy group is left at the tRNA terminus and a 5'-phosphoryl group is left at the trailer molecule.. Its function is as follows. Zinc phosphodiesterase, which displays some tRNA 3'-processing endonuclease activity. Probably involved in tRNA maturation, by removing a 3'-trailer from precursor tRNA. The protein is Ribonuclease Z of Staphylococcus carnosus (strain TM300).